Consider the following 201-residue polypeptide: Small ribosomal subunit protein uS4 (201 aa).

The S4 RNA-binding domain maps to 91-151 (SRLDNVVYRA…DKSINTLPFE (61 aa)).

This sequence belongs to the universal ribosomal protein uS4 family. Part of the 30S ribosomal subunit. Contacts protein S5. The interaction surface between S4 and S5 is involved in control of translational fidelity.

Functionally, one of the primary rRNA binding proteins, it binds directly to 16S rRNA where it nucleates assembly of the body of the 30S subunit. With S5 and S12 plays an important role in translational accuracy. This Mycolicibacterium gilvum (strain PYR-GCK) (Mycobacterium gilvum (strain PYR-GCK)) protein is Small ribosomal subunit protein uS4.